The following is a 404-amino-acid chain: Probable tRNA sulfurtransferase (404 aa).

The 106-residue stretch at 61–166 (EAVSERLKDV…SGYSYIMCDE (106 aa)) folds into the THUMP domain. Residues 184–185 (LL), 209–210 (HF), Arg-266, Gly-288, and Gln-297 contribute to the ATP site.

It belongs to the ThiI family.

The protein resides in the cytoplasm. It carries out the reaction [ThiI sulfur-carrier protein]-S-sulfanyl-L-cysteine + a uridine in tRNA + 2 reduced [2Fe-2S]-[ferredoxin] + ATP + H(+) = [ThiI sulfur-carrier protein]-L-cysteine + a 4-thiouridine in tRNA + 2 oxidized [2Fe-2S]-[ferredoxin] + AMP + diphosphate. The catalysed reaction is [ThiS sulfur-carrier protein]-C-terminal Gly-Gly-AMP + S-sulfanyl-L-cysteinyl-[cysteine desulfurase] + AH2 = [ThiS sulfur-carrier protein]-C-terminal-Gly-aminoethanethioate + L-cysteinyl-[cysteine desulfurase] + A + AMP + 2 H(+). It participates in cofactor biosynthesis; thiamine diphosphate biosynthesis. Its function is as follows. Catalyzes the ATP-dependent transfer of a sulfur to tRNA to produce 4-thiouridine in position 8 of tRNAs, which functions as a near-UV photosensor. Also catalyzes the transfer of sulfur to the sulfur carrier protein ThiS, forming ThiS-thiocarboxylate. This is a step in the synthesis of thiazole, in the thiamine biosynthesis pathway. The sulfur is donated as persulfide by IscS. This chain is Probable tRNA sulfurtransferase, found in Bacillus cereus (strain ATCC 14579 / DSM 31 / CCUG 7414 / JCM 2152 / NBRC 15305 / NCIMB 9373 / NCTC 2599 / NRRL B-3711).